We begin with the raw amino-acid sequence, 557 residues long: Hyaluronan synthase 3 (557 aa).

At 1 to 10 the chain is on the cytoplasmic side; that stretch reads MPGKFQTGLR. A helical transmembrane segment spans residues 11–31; it reads VLATCLFALLVLGGILVAYVT. Over 32 to 44 the chain is Extracellular; it reads GYQFIHTDRHHLS. Residues 45-65 form a helical membrane-spanning segment; it reads FGLYGAILGLHLLSQSLFAFL. Residues 66–367 lie on the Cytoplasmic side of the membrane; that stretch reads EHRKMRGGGR…NALWFHKHHL (302 aa). Residues 368 to 388 traverse the membrane as a helical segment; the sequence is WMTYESVVTGFFPFFLVATVV. The Extracellular segment spans residues 389–398; it reads QLFYRGRVWN. Residues 399–419 traverse the membrane as a helical segment; sequence ILLFLLTVQLVGILKATYACI. Over 420–430 the chain is Cytoplasmic; that stretch reads LRGNAEMIFMS. Residues 431–451 form a helical membrane-spanning segment; that stretch reads LYSLLYMTSLLPAKIFAVITI. Over 452-463 the chain is Extracellular; sequence KKSGWGTSGRRK. A helical membrane pass occupies residues 464–484; it reads LVVNFMGMVPVSVWFCILLGG. Residues 485–501 lie on the Cytoplasmic side of the membrane; the sequence is LVYTAYCQSHDPFTETE. A helical membrane pass occupies residues 502–522; it reads LLFLLTGAILYGCYWVALLSL. The Extracellular segment spans residues 523–557; sequence YLALIARRCGKRQELYNLALEEVSEPEPAAKAIKP.

This sequence belongs to the NodC/HAS family. It depends on Mg(2+) as a cofactor. O-GlcNAcylation increases the hyaluronan synthase activity, HAS3 stability and its plasma membrane residence. The concentration of UDP-GlcNAc controls the level of O-GlcNAc modification.

The protein resides in the cell membrane. It localises to the golgi apparatus membrane. It is found in the golgi apparatus. The protein localises to the trans-Golgi network membrane. Its subcellular location is the cytoplasmic vesicle. It catalyses the reaction [hyaluronan](n) + UDP-N-acetyl-alpha-D-glucosamine = N-acetyl-beta-D-glucosaminyl-(1-&gt;4)-[hyaluronan](n) + UDP + H(+). The catalysed reaction is N-acetyl-beta-D-glucosaminyl-(1-&gt;4)-[hyaluronan](n) + UDP-alpha-D-glucuronate = [hyaluronan](n+1) + UDP + H(+). It participates in glycan biosynthesis; hyaluronan biosynthesis. In terms of biological role, catalyzes the addition of GlcNAc or GlcUA monosaccharides to the nascent hyaluronan polymer. Therefore, it is essential to hyaluronan synthesis a major component of most extracellular matrices that has a structural role in tissues architectures and regulates cell adhesion, migration and differentiation. This is one of three isoenzymes responsible for cellular hyaluronan synthesis. This chain is Hyaluronan synthase 3 (has3), found in Xenopus laevis (African clawed frog).